A 92-amino-acid polypeptide reads, in one-letter code: DNA/RNA-binding protein Alba (92 aa).

Lysine 11 carries the N6-acetyllysine modification.

The protein belongs to the histone-like Alba family. In terms of processing, acetylated. Acetylation at Lys-11 decreases DNA-binding affinity.

The protein localises to the cytoplasm. Its subcellular location is the chromosome. Binds double-stranded DNA tightly but without sequence specificity. Involved in DNA compaction. The protein is DNA/RNA-binding protein Alba of Pyrobaculum neutrophilum (strain DSM 2338 / JCM 9278 / NBRC 100436 / V24Sta) (Thermoproteus neutrophilus).